Consider the following 535-residue polypeptide: CTP synthase (535 aa).

The amidoligase domain stretch occupies residues 1-268 (MSTKYIFVTG…DQIVCDHLKL (268 aa)). CTP is bound at residue Ser-14. Ser-14 is a UTP binding site. 15-20 (SIGKGI) is a binding site for ATP. An L-glutamine-binding site is contributed by Tyr-55. Residue Asp-72 participates in ATP binding. 2 residues coordinate Mg(2+): Asp-72 and Glu-142. Residues 149 to 151 (DIE), 189 to 194 (KTKPTQ), and Lys-225 each bind CTP. UTP-binding positions include 189-194 (KTKPTQ) and Lys-225. Positions 293–535 (KISLVGKYVE…FVTAAVENSN (243 aa)) constitute a Glutamine amidotransferase type-1 domain. Gly-355 serves as a coordination point for L-glutamine. The active-site Nucleophile; for glutamine hydrolysis is Cys-382. L-glutamine is bound by residues 383–386 (LGMQ), Glu-406, and Arg-464. Active-site residues include His-509 and Glu-511.

It belongs to the CTP synthase family. In terms of assembly, homotetramer.

It carries out the reaction UTP + L-glutamine + ATP + H2O = CTP + L-glutamate + ADP + phosphate + 2 H(+). The enzyme catalyses L-glutamine + H2O = L-glutamate + NH4(+). It catalyses the reaction UTP + NH4(+) + ATP = CTP + ADP + phosphate + 2 H(+). Its pathway is pyrimidine metabolism; CTP biosynthesis via de novo pathway; CTP from UDP: step 2/2. With respect to regulation, allosterically activated by GTP, when glutamine is the substrate; GTP has no effect on the reaction when ammonia is the substrate. The allosteric effector GTP functions by stabilizing the protein conformation that binds the tetrahedral intermediate(s) formed during glutamine hydrolysis. Inhibited by the product CTP, via allosteric rather than competitive inhibition. Catalyzes the ATP-dependent amination of UTP to CTP with either L-glutamine or ammonia as the source of nitrogen. Regulates intracellular CTP levels through interactions with the four ribonucleotide triphosphates. The chain is CTP synthase from Streptococcus pneumoniae (strain ATCC BAA-255 / R6).